The following is an 853-amino-acid chain: Envelope glycoprotein gp160 (853 aa).

An N-terminal signal peptide occupies residues 1 to 31 (MRARGIERNCQNWWKWGIMLLGILMTCSAAD). Topologically, residues 32-681 (NLWVTVYYGV…ITQWLWYIKI (650 aa)) are extracellular. Cysteine 53 and cysteine 73 are joined by a disulfide. Residues asparagine 87, asparagine 129, asparagine 137, asparagine 143, asparagine 153, asparagine 157, asparagine 183, asparagine 188, asparagine 198, asparagine 235, asparagine 242, asparagine 263, asparagine 277, and asparagine 290 are each glycosylated (N-linked (GlcNAc...) asparagine; by host). Cystine bridges form between cysteine 118–cysteine 206, cysteine 125–cysteine 197, cysteine 130–cysteine 154, cysteine 219–cysteine 248, and cysteine 229–cysteine 240. Positions 130 to 153 (CSDELRNNGTMGNNVTTEEKGMKN) are V1. The interval 154–197 (CSFNVTTVLKDKKQQVYALFYRLDIVPIDNDSSTNSTNYRLINC) is V2. Positions 297 to 329 (CARPYQNTRQRTPIGLGQSLYTTRSRSIIGQAH) are V3. Residues cysteine 297 and cysteine 330 are joined by a disulfide bond. N-linked (GlcNAc...) asparagine; by host glycans are attached at residues asparagine 331 and asparagine 353. Positions 362–372 (SSGGDPEITTH) are CD4-binding loop. 2 disulfide bridges follow: cysteine 376–cysteine 442 and cysteine 383–cysteine 416. Residues 383 to 416 (CNTSGLFNSTWNISAWNNITESNNSTNTNITLQC) are V4. 11 N-linked (GlcNAc...) asparagine; by host glycosylation sites follow: asparagine 384, asparagine 390, asparagine 394, asparagine 400, asparagine 405, asparagine 406, asparagine 411, asparagine 445, asparagine 458, asparagine 459, and asparagine 462. V5 stretches follow at residues 457–468 (INNSTNETFRPG) and 460–468 (STNETFRPG). Positions 509–529 (AIGLGAMFLGFLGAAGSTMGA) are fusion peptide. The immunosuppression stretch occupies residues 571-589 (KQLQARILAVERYLKDQQL). A disulfide bond links cysteine 595 and cysteine 601. Asparagine 608, asparagine 613, asparagine 622, and asparagine 634 each carry an N-linked (GlcNAc...) asparagine; by host glycan. The stretch at 630 to 664 (REIDNYTGLIYSLIEESQTQQEKNEKELLELDKWA) forms a coiled coil. Residues 659 to 680 (ELDKWASLWNWFSITQWLWYIK) are MPER; binding to GalCer. The chain crosses the membrane as a helical span at residues 682–702 (FIMIIGGLIGLRIVFAVLSLV). Topologically, residues 703 to 853 (NRVRQGYSPL…IRQGLERSLL (151 aa)) are cytoplasmic. The YXXL motif; contains endocytosis signal motif lies at 709–712 (YSPL). The segment at 716–738 (TLLPAPRGPDRPEGTEEEGGERG) is disordered. Over residues 723–738 (GPDRPEGTEEEGGERG) the composition is skewed to basic and acidic residues. S-palmitoyl cysteine; by host attachment occurs at residues cysteine 761 and cysteine 834. Residues 852-853 (LL) carry the Di-leucine internalization motif motif.

Belongs to the HIV-1 env protein family. In terms of assembly, the mature envelope protein (Env) consists of a homotrimer of non-covalently associated gp120-gp41 heterodimers. The resulting complex protrudes from the virus surface as a spike. There seems to be as few as 10 spikes on the average virion. Interacts with host CD4, CCR5 and CXCR4. Gp120 also interacts with the C-type lectins CD209/DC-SIGN and CLEC4M/DC-SIGNR (collectively referred to as DC-SIGN(R)). Gp120 and gp41 interact with GalCer. Gp120 interacts with host ITGA4/ITGB7 complex; on CD4+ T-cells, this interaction results in rapid activation of integrin ITGAL/LFA-1, which facilitates efficient cell-to-cell spreading of HIV-1. Gp120 interacts with cell-associated heparan sulfate; this interaction increases virus infectivity on permissive cells and may be involved in infection of CD4- cells. The mature envelope protein (Env) consists of a homotrimer of non-covalently associated gp120-gp41 heterodimers. The resulting complex protrudes from the virus surface as a spike. There seems to be as few as 10 spikes on the average virion. Highly glycosylated by host. The high number of glycan on the protein is reffered to as 'glycan shield' because it contributes to hide protein sequence from adaptive immune system. Post-translationally, palmitoylation of the transmembrane protein and of Env polyprotein (prior to its proteolytic cleavage) is essential for their association with host cell membrane lipid rafts. Palmitoylation is therefore required for envelope trafficking to classical lipid rafts, but not for viral replication. In terms of processing, specific enzymatic cleavages in vivo yield mature proteins. Envelope glycoproteins are synthesized as an inactive precursor that is heavily N-glycosylated and processed likely by host cell furin in the Golgi to yield the mature SU and TM proteins. The cleavage site between SU and TM requires the minimal sequence [KR]-X-[KR]-R. About 2 of the 9 disulfide bonds of gp41 are reduced by P4HB/PDI, following binding to CD4 receptor.

Its subcellular location is the virion membrane. The protein localises to the host cell membrane. It localises to the host endosome membrane. Its function is as follows. Oligomerizes in the host endoplasmic reticulum into predominantly trimers. In a second time, gp160 transits in the host Golgi, where glycosylation is completed. The precursor is then proteolytically cleaved in the trans-Golgi and thereby activated by cellular furin or furin-like proteases to produce gp120 and gp41. Attaches the virus to the host lymphoid cell by binding to the primary receptor CD4. This interaction induces a structural rearrangement creating a high affinity binding site for a chemokine coreceptor like CXCR4 and/or CCR5. Acts as a ligand for CD209/DC-SIGN and CLEC4M/DC-SIGNR, which are respectively found on dendritic cells (DCs), and on endothelial cells of liver sinusoids and lymph node sinuses. These interactions allow capture of viral particles at mucosal surfaces by these cells and subsequent transmission to permissive cells. HIV subverts the migration properties of dendritic cells to gain access to CD4+ T-cells in lymph nodes. Virus transmission to permissive T-cells occurs either in trans (without DCs infection, through viral capture and transmission), or in cis (following DCs productive infection, through the usual CD4-gp120 interaction), thereby inducing a robust infection. In trans infection, bound virions remain infectious over days and it is proposed that they are not degraded, but protected in non-lysosomal acidic organelles within the DCs close to the cell membrane thus contributing to the viral infectious potential during DCs' migration from the periphery to the lymphoid tissues. On arrival at lymphoid tissues, intact virions recycle back to DCs' cell surface allowing virus transmission to CD4+ T-cells. In terms of biological role, acts as a class I viral fusion protein. Under the current model, the protein has at least 3 conformational states: pre-fusion native state, pre-hairpin intermediate state, and post-fusion hairpin state. During fusion of viral and target intracellular membranes, the coiled coil regions (heptad repeats) assume a trimer-of-hairpins structure, positioning the fusion peptide in close proximity to the C-terminal region of the ectodomain. The formation of this structure appears to drive apposition and subsequent fusion of viral and target cell membranes. Complete fusion occurs in host cell endosomes and is dynamin-dependent, however some lipid transfer might occur at the plasma membrane. The virus undergoes clathrin-dependent internalization long before endosomal fusion, thus minimizing the surface exposure of conserved viral epitopes during fusion and reducing the efficacy of inhibitors targeting these epitopes. Membranes fusion leads to delivery of the nucleocapsid into the cytoplasm. The protein is Envelope glycoprotein gp160 of Human immunodeficiency virus type 1 group M subtype D (isolate ELI) (HIV-1).